Reading from the N-terminus, the 493-residue chain is Glutamate--tRNA ligase (493 aa).

The short motif at Pro-10–Thr-20 is the 'HIGH' region element. Residues Lys-251–Arg-255 carry the 'KMSKS' region motif. An ATP-binding site is contributed by Lys-254.

The protein belongs to the class-I aminoacyl-tRNA synthetase family. Glutamate--tRNA ligase type 1 subfamily. Monomer.

Its subcellular location is the cytoplasm. The enzyme catalyses tRNA(Glu) + L-glutamate + ATP = L-glutamyl-tRNA(Glu) + AMP + diphosphate. Functionally, catalyzes the attachment of glutamate to tRNA(Glu) in a two-step reaction: glutamate is first activated by ATP to form Glu-AMP and then transferred to the acceptor end of tRNA(Glu). The polypeptide is Glutamate--tRNA ligase (Pseudomonas putida (strain GB-1)).